Here is a 113-residue protein sequence, read N- to C-terminus: Putative glycerol transporter Lin0367 (113 aa).

Helical transmembrane passes span 3 to 23 (IGIA…IRMM), 30 to 50 (EWGA…VWTI), 63 to 83 (GTVW…ASLL), and 92 to 112 (VVNL…LSLF).

Its subcellular location is the membrane. Its function is as follows. Could be involved in the glycerol uptake either via facilitated diffusion or active transport. The sequence is that of Putative glycerol transporter Lin0367 from Listeria innocua serovar 6a (strain ATCC BAA-680 / CLIP 11262).